The following is a 195-amino-acid chain: Orotate phosphoribosyltransferase (195 aa).

117-125 (EDITTTGGS) lines the 5-phospho-alpha-D-ribose 1-diphosphate pocket. Residues T121 and R149 each coordinate orotate.

Belongs to the purine/pyrimidine phosphoribosyltransferase family. PyrE subfamily. Homodimer. Requires Mg(2+) as cofactor.

The enzyme catalyses orotidine 5'-phosphate + diphosphate = orotate + 5-phospho-alpha-D-ribose 1-diphosphate. The protein operates within pyrimidine metabolism; UMP biosynthesis via de novo pathway; UMP from orotate: step 1/2. Functionally, catalyzes the transfer of a ribosyl phosphate group from 5-phosphoribose 1-diphosphate to orotate, leading to the formation of orotidine monophosphate (OMP). This chain is Orotate phosphoribosyltransferase, found in Acidithiobacillus ferrooxidans (strain ATCC 53993 / BNL-5-31) (Leptospirillum ferrooxidans (ATCC 53993)).